Here is a 274-residue protein sequence, read N- to C-terminus: 4-hydroxy-3-methylbut-2-enyl diphosphate reductase (274 aa).

Cys-12 contributes to the [4Fe-4S] cluster binding site. (2E)-4-hydroxy-3-methylbut-2-enyl diphosphate contacts are provided by His-36 and His-70. The dimethylallyl diphosphate site is built by His-36 and His-70. The isopentenyl diphosphate site is built by His-36 and His-70. Cys-92 is a binding site for [4Fe-4S] cluster. A (2E)-4-hydroxy-3-methylbut-2-enyl diphosphate-binding site is contributed by His-120. Position 120 (His-120) interacts with dimethylallyl diphosphate. His-120 contributes to the isopentenyl diphosphate binding site. The active-site Proton donor is Glu-122. Thr-158 contacts (2E)-4-hydroxy-3-methylbut-2-enyl diphosphate. Position 186 (Cys-186) interacts with [4Fe-4S] cluster. Positions 214, 215, 216, and 258 each coordinate (2E)-4-hydroxy-3-methylbut-2-enyl diphosphate. Ser-214, Ser-215, Asn-216, and Ser-258 together coordinate dimethylallyl diphosphate. Positions 214, 215, 216, and 258 each coordinate isopentenyl diphosphate.

Belongs to the IspH family. Requires [4Fe-4S] cluster as cofactor.

The catalysed reaction is isopentenyl diphosphate + 2 oxidized [2Fe-2S]-[ferredoxin] + H2O = (2E)-4-hydroxy-3-methylbut-2-enyl diphosphate + 2 reduced [2Fe-2S]-[ferredoxin] + 2 H(+). It catalyses the reaction dimethylallyl diphosphate + 2 oxidized [2Fe-2S]-[ferredoxin] + H2O = (2E)-4-hydroxy-3-methylbut-2-enyl diphosphate + 2 reduced [2Fe-2S]-[ferredoxin] + 2 H(+). Its pathway is isoprenoid biosynthesis; dimethylallyl diphosphate biosynthesis; dimethylallyl diphosphate from (2E)-4-hydroxy-3-methylbutenyl diphosphate: step 1/1. It participates in isoprenoid biosynthesis; isopentenyl diphosphate biosynthesis via DXP pathway; isopentenyl diphosphate from 1-deoxy-D-xylulose 5-phosphate: step 6/6. Its function is as follows. Catalyzes the conversion of 1-hydroxy-2-methyl-2-(E)-butenyl 4-diphosphate (HMBPP) into a mixture of isopentenyl diphosphate (IPP) and dimethylallyl diphosphate (DMAPP). Acts in the terminal step of the DOXP/MEP pathway for isoprenoid precursor biosynthesis. The sequence is that of 4-hydroxy-3-methylbut-2-enyl diphosphate reductase from Helicobacter pylori (strain Shi470).